A 455-amino-acid polypeptide reads, in one-letter code: Bifunctional protein GlmU (455 aa).

The tract at residues 1 to 226 (MSLEIVILAA…PMEVQGANDR (226 aa)) is pyrophosphorylase. UDP-N-acetyl-alpha-D-glucosamine-binding positions include 8–11 (LAAG), Lys-22, Gln-73, 78–79 (GT), 99–101 (YGD), Gly-136, Glu-151, Asn-166, and Asn-224. Asp-101 is a binding site for Mg(2+). Asn-224 lines the Mg(2+) pocket. Positions 227 to 247 (KQLSELERHYQLRAGRRLMAQ) are linker. Positions 248 to 455 (GVTLRDPARF…WKRPEKIKKN (208 aa)) are N-acetyltransferase. The UDP-N-acetyl-alpha-D-glucosamine site is built by Arg-330 and Lys-348. His-360 serves as the catalytic Proton acceptor. Positions 363 and 374 each coordinate UDP-N-acetyl-alpha-D-glucosamine. Residues Ala-377, 383-384 (NY), Ser-402, Ala-420, and Arg-437 contribute to the acetyl-CoA site.

This sequence in the N-terminal section; belongs to the N-acetylglucosamine-1-phosphate uridyltransferase family. The protein in the C-terminal section; belongs to the transferase hexapeptide repeat family. As to quaternary structure, homotrimer. The cofactor is Mg(2+).

It localises to the cytoplasm. The catalysed reaction is alpha-D-glucosamine 1-phosphate + acetyl-CoA = N-acetyl-alpha-D-glucosamine 1-phosphate + CoA + H(+). It catalyses the reaction N-acetyl-alpha-D-glucosamine 1-phosphate + UTP + H(+) = UDP-N-acetyl-alpha-D-glucosamine + diphosphate. The protein operates within nucleotide-sugar biosynthesis; UDP-N-acetyl-alpha-D-glucosamine biosynthesis; N-acetyl-alpha-D-glucosamine 1-phosphate from alpha-D-glucosamine 6-phosphate (route II): step 2/2. It functions in the pathway nucleotide-sugar biosynthesis; UDP-N-acetyl-alpha-D-glucosamine biosynthesis; UDP-N-acetyl-alpha-D-glucosamine from N-acetyl-alpha-D-glucosamine 1-phosphate: step 1/1. Its pathway is bacterial outer membrane biogenesis; LPS lipid A biosynthesis. Its function is as follows. Catalyzes the last two sequential reactions in the de novo biosynthetic pathway for UDP-N-acetylglucosamine (UDP-GlcNAc). The C-terminal domain catalyzes the transfer of acetyl group from acetyl coenzyme A to glucosamine-1-phosphate (GlcN-1-P) to produce N-acetylglucosamine-1-phosphate (GlcNAc-1-P), which is converted into UDP-GlcNAc by the transfer of uridine 5-monophosphate (from uridine 5-triphosphate), a reaction catalyzed by the N-terminal domain. This Pseudomonas fluorescens (strain Pf0-1) protein is Bifunctional protein GlmU.